The following is a 733-amino-acid chain: Alpha,alpha-trehalose-phosphate synthase [UDP-forming] A (733 aa).

The protein in the N-terminal section; belongs to the glycosyltransferase 20 family. In the C-terminal section; belongs to the trehalose phosphatase family.

The catalysed reaction is D-glucose 6-phosphate + UDP-alpha-D-glucose = alpha,alpha-trehalose 6-phosphate + UDP + H(+). Synthesizes trehalose 6-phosphate, the precursor for the production of trehalose, the main carbohydrate storage reserve of the dormant spore. Trehalose accumulates in both prestalk and prespore cells and then is rapidly metabolized during terminal differentiation of stalk cells, while being stored in spores, where it serves as the principal energy and carbon source for germination. This Dictyostelium discoideum (Social amoeba) protein is Alpha,alpha-trehalose-phosphate synthase [UDP-forming] A (tpsA).